The primary structure comprises 272 residues: NAD kinase (272 aa).

The Proton acceptor role is filled by Asp50. NAD(+) is bound by residues 50 to 51 (DG), 126 to 127 (NE), Arg152, Asp154, 165 to 170 (TAYNKS), and Ala189.

The protein belongs to the NAD kinase family. The cofactor is a divalent metal cation.

It localises to the cytoplasm. It carries out the reaction NAD(+) + ATP = ADP + NADP(+) + H(+). In terms of biological role, involved in the regulation of the intracellular balance of NAD and NADP, and is a key enzyme in the biosynthesis of NADP. Catalyzes specifically the phosphorylation on 2'-hydroxyl of the adenosine moiety of NAD to yield NADP. The sequence is that of NAD kinase from Streptococcus pneumoniae serotype 19F (strain G54).